The chain runs to 167 residues: Small ribosomal subunit protein uS9 (167 aa).

The interval 1–41 (MNTEAVAPDVAEEEVLTSYTSESSASADDAPKKERPALTVS) is disordered. Over residues 17–26 (TSYTSESSAS) the composition is skewed to polar residues.

Belongs to the universal ribosomal protein uS9 family.

The chain is Small ribosomal subunit protein uS9 from Renibacterium salmoninarum (strain ATCC 33209 / DSM 20767 / JCM 11484 / NBRC 15589 / NCIMB 2235).